Here is a 407-residue protein sequence, read N- to C-terminus: Multifunctional CCA protein (407 aa).

ATP is bound by residues Gly-8 and Arg-11. Residues Gly-8 and Arg-11 each coordinate CTP. Mg(2+) is bound by residues Asp-21 and Asp-23. Positions 91, 137, and 140 each coordinate ATP. Arg-91, Arg-137, and Arg-140 together coordinate CTP. In terms of domain architecture, HD spans 228-329 (TGIHTLMVAQ…IKIFDKMDVW (102 aa)).

This sequence belongs to the tRNA nucleotidyltransferase/poly(A) polymerase family. Bacterial CCA-adding enzyme type 1 subfamily. In terms of assembly, monomer. Can also form homodimers and oligomers. Mg(2+) serves as cofactor. It depends on Ni(2+) as a cofactor.

It carries out the reaction a tRNA precursor + 2 CTP + ATP = a tRNA with a 3' CCA end + 3 diphosphate. The enzyme catalyses a tRNA with a 3' CCA end + 2 CTP + ATP = a tRNA with a 3' CCACCA end + 3 diphosphate. Functionally, catalyzes the addition and repair of the essential 3'-terminal CCA sequence in tRNAs without using a nucleic acid template. Adds these three nucleotides in the order of C, C, and A to the tRNA nucleotide-73, using CTP and ATP as substrates and producing inorganic pyrophosphate. tRNA 3'-terminal CCA addition is required both for tRNA processing and repair. Also involved in tRNA surveillance by mediating tandem CCA addition to generate a CCACCA at the 3' terminus of unstable tRNAs. While stable tRNAs receive only 3'-terminal CCA, unstable tRNAs are marked with CCACCA and rapidly degraded. This is Multifunctional CCA protein from Aliivibrio fischeri (strain ATCC 700601 / ES114) (Vibrio fischeri).